Reading from the N-terminus, the 81-residue chain is Small ribosomal subunit protein bS16 (81 aa).

Belongs to the bacterial ribosomal protein bS16 family.

This is Small ribosomal subunit protein bS16 from Clostridium botulinum (strain Eklund 17B / Type B).